We begin with the raw amino-acid sequence, 146 residues long: Large ribosomal subunit protein uL15 (146 aa).

Residues Met1–Arg13 are compositionally biased toward basic and acidic residues. Residues Met1–Tyr58 form a disordered region. Gly residues-rich tracts occupy residues Arg21–Ala31 and Ser42–Gly52.

Belongs to the universal ribosomal protein uL15 family. In terms of assembly, part of the 50S ribosomal subunit.

Binds to the 23S rRNA. The chain is Large ribosomal subunit protein uL15 from Shouchella clausii (strain KSM-K16) (Alkalihalobacillus clausii).